The following is a 352-amino-acid chain: UDP-3-O-acylglucosamine N-acyltransferase (352 aa).

The Proton acceptor role is filled by histidine 257.

This sequence belongs to the transferase hexapeptide repeat family. LpxD subfamily. As to quaternary structure, homotrimer.

The enzyme catalyses a UDP-3-O-[(3R)-3-hydroxyacyl]-alpha-D-glucosamine + a (3R)-hydroxyacyl-[ACP] = a UDP-2-N,3-O-bis[(3R)-3-hydroxyacyl]-alpha-D-glucosamine + holo-[ACP] + H(+). Its pathway is bacterial outer membrane biogenesis; LPS lipid A biosynthesis. Catalyzes the N-acylation of UDP-3-O-acylglucosamine using 3-hydroxyacyl-ACP as the acyl donor. Is involved in the biosynthesis of lipid A, a phosphorylated glycolipid that anchors the lipopolysaccharide to the outer membrane of the cell. The polypeptide is UDP-3-O-acylglucosamine N-acyltransferase (Methylobacterium nodulans (strain LMG 21967 / CNCM I-2342 / ORS 2060)).